The chain runs to 195 residues: Pyruvoyl-dependent arginine decarboxylase AaxB (195 aa).

At S53 the chain carries Pyruvic acid (Ser).

The protein belongs to the pyruvoyl-dependent arginine decarboxylase family. As to quaternary structure, trimer of an alpha-beta dimer. The cofactor is pyruvate.

The protein localises to the cytoplasm. The enzyme catalyses L-arginine + H(+) = agmatine + CO2. Functionally, part of the AaxABC system, catalyzes the decarboxylation of L-arginine. The arginine uptake by the bacterium in the macrophage may be a virulence factor against the host innate immune response. This is Pyruvoyl-dependent arginine decarboxylase AaxB (aaxB) from Chlamydia trachomatis serovar L2 (strain ATCC VR-902B / DSM 19102 / 434/Bu).